Reading from the N-terminus, the 341-residue chain is GTP 3',8-cyclase (341 aa).

Residues 11-231 form the Radical SAM core domain; the sequence is KRERPLRDLR…DLINQHMPTE (221 aa). Residue arginine 20 coordinates GTP. [4Fe-4S] cluster is bound by residues cysteine 27 and cysteine 31. Tyrosine 33 contacts S-adenosyl-L-methionine. Position 34 (cysteine 34) interacts with [4Fe-4S] cluster. Arginine 75 contributes to the GTP binding site. Residue glycine 79 coordinates S-adenosyl-L-methionine. Threonine 106 provides a ligand contact to GTP. Serine 130 lines the S-adenosyl-L-methionine pocket. A GTP-binding site is contributed by lysine 167. Methionine 201 provides a ligand contact to S-adenosyl-L-methionine. [4Fe-4S] cluster-binding residues include cysteine 265 and cysteine 268. 270–272 lines the GTP pocket; sequence RAR. Position 282 (cysteine 282) interacts with [4Fe-4S] cluster.

The protein belongs to the radical SAM superfamily. MoaA family. In terms of assembly, monomer and homodimer. [4Fe-4S] cluster is required as a cofactor.

The catalysed reaction is GTP + AH2 + S-adenosyl-L-methionine = (8S)-3',8-cyclo-7,8-dihydroguanosine 5'-triphosphate + 5'-deoxyadenosine + L-methionine + A + H(+). The protein operates within cofactor biosynthesis; molybdopterin biosynthesis. In terms of biological role, catalyzes the cyclization of GTP to (8S)-3',8-cyclo-7,8-dihydroguanosine 5'-triphosphate. The chain is GTP 3',8-cyclase from Bacillus velezensis (strain DSM 23117 / BGSC 10A6 / LMG 26770 / FZB42) (Bacillus amyloliquefaciens subsp. plantarum).